The following is a 378-amino-acid chain: Deoxyhypusine synthase (378 aa).

Residues Ser107–Ser111, Ser133–Gly135, Glu139, and Asp253 contribute to the NAD(+) site. A spermidine-binding site is contributed by Glu138–Glu139. A spermidine-binding site is contributed by Asp258. Residue Gly300 coordinates NAD(+). Spermidine is bound at residue His305. Thr325–Gly326 serves as a coordination point for NAD(+). Residues Gly331–Asp333 and Glu340–Lys346 contribute to the spermidine site. The active-site Nucleophile is Lys346. Asp359–Ala360 contacts NAD(+).

This sequence belongs to the deoxyhypusine synthase family. Requires NAD(+) as cofactor.

It catalyses the reaction [eIF5A protein]-L-lysine + spermidine = [eIF5A protein]-deoxyhypusine + propane-1,3-diamine. The protein operates within protein modification; eIF5A hypusination. In terms of biological role, catalyzes the NAD-dependent oxidative cleavage of spermidine and the subsequent transfer of the butylamine moiety of spermidine to the epsilon-amino group of a specific lysine residue of the eIF-5A precursor protein to form the intermediate deoxyhypusine residue. This is Deoxyhypusine synthase (DYS1) from Debaryomyces hansenii (strain ATCC 36239 / CBS 767 / BCRC 21394 / JCM 1990 / NBRC 0083 / IGC 2968) (Yeast).